Consider the following 370-residue polypeptide: tRNA-specific 2-thiouridylase MnmA (370 aa).

ATP-binding positions include Ala24–Ser31 and Leu50. Residue Cys119 is the Nucleophile of the active site. Residues Cys119 and Cys215 are joined by a disulfide bond. Residue Gly143 participates in ATP binding. Residues Lys165 to Gln167 are interaction with tRNA. Cys215 (cysteine persulfide intermediate) is an active-site residue.

Belongs to the MnmA/TRMU family.

It is found in the cytoplasm. It catalyses the reaction S-sulfanyl-L-cysteinyl-[protein] + uridine(34) in tRNA + AH2 + ATP = 2-thiouridine(34) in tRNA + L-cysteinyl-[protein] + A + AMP + diphosphate + H(+). Functionally, catalyzes the 2-thiolation of uridine at the wobble position (U34) of tRNA, leading to the formation of s(2)U34. The polypeptide is tRNA-specific 2-thiouridylase MnmA (Wolbachia sp. subsp. Drosophila simulans (strain wRi)).